A 248-amino-acid chain; its full sequence is tRNA uridine(34) hydroxylase (248 aa).

The Rhodanese domain occupies 124 to 218; the sequence is TKQDVIVVDT…YLEDTQNKNN (95 aa). Catalysis depends on Cys178, which acts as the Cysteine persulfide intermediate.

The protein belongs to the TrhO family.

It catalyses the reaction uridine(34) in tRNA + AH2 + O2 = 5-hydroxyuridine(34) in tRNA + A + H2O. Catalyzes oxygen-dependent 5-hydroxyuridine (ho5U) modification at position 34 in tRNAs. This Rickettsia bellii (strain OSU 85-389) protein is tRNA uridine(34) hydroxylase.